The chain runs to 490 residues: Delta(14)-sterol reductase (490 aa).

Helical transmembrane passes span 23-43, 80-100, 136-156, 160-180, 230-250, 255-275, and 324-344; these read FGGP…VHVF, VFGL…ALSL, LAIL…WTFI, FAQI…FVYV, EFME…AFIA, LYGY…FYVF, and QLGA…YSIF. NADP(+) contacts are provided by residues K351, R355, I378, W383, and 390–391; that span reads NY. A helical membrane pass occupies residues 436-456; it reads ARGWGIVFTYFYILYFAILLI. Residues D462, 466 to 470, and Y477 each bind NADP(+); that span reads CSKKY.

It belongs to the ERG4/ERG24 family.

Its subcellular location is the membrane. The enzyme catalyses 4,4-dimethyl-5alpha-cholesta-8,24-dien-3beta-ol + NADP(+) = 4,4-dimethyl-5alpha-cholesta-8,14,24-trien-3beta-ol + NADPH + H(+). It participates in steroid biosynthesis; zymosterol biosynthesis; zymosterol from lanosterol: step 2/6. In terms of biological role, reduces the C14=C15 double bond of 4,4-dimethyl-cholesta-8,14,24-trienol to produce 4,4-dimethyl-cholesta-8,24-dienol. In Neurospora crassa (strain ATCC 24698 / 74-OR23-1A / CBS 708.71 / DSM 1257 / FGSC 987), this protein is Delta(14)-sterol reductase (erg-3).